The following is a 410-amino-acid chain: Sporulation killing factor maturation protein SkfB (410 aa).

Residues 103 to 314 (SYLPISCTLQ…LREARHKWGD (212 aa)) enclose the Radical SAM core domain. C117, C121, C124, C380, C385, and C387 together coordinate [4Fe-4S] cluster.

The protein belongs to the radical SAM superfamily. The cofactor is [4Fe-4S] cluster.

The protein localises to the cytoplasm. Catalyzes the formation of the thioether bond required for production of the sporulation killing factor (SKF) from SkfA. Forms the cysteine-methionine thioether bond found in SKF; the acceptor amino acid can be hydrophobic, aromatic or a small hydrophilic amino acid but not a larger hydrophilic amino acid, i.e. Met=Ala, Phe, Leu, Tyr&gt;Asn, Ser&gt;&gt;Gln, Glu, Lys. The relative position of Cys and Met in the substrate cannot be inverted, in vitro the thioether bond cannot be made in the absence of the SkfA propeptide, suggesting this is the first reaction in SKF maturation. In vitro, in the absence of a second substrate, cleaves S-adenosyl-L-methionine into Met and 5'-dA. This Bacillus subtilis (strain 168) protein is Sporulation killing factor maturation protein SkfB.